The primary structure comprises 100 residues: Large ribosomal subunit protein uL23 (100 aa).

Belongs to the universal ribosomal protein uL23 family. Part of the 50S ribosomal subunit. Contacts protein L29, and trigger factor when it is bound to the ribosome.

Its function is as follows. One of the early assembly proteins it binds 23S rRNA. One of the proteins that surrounds the polypeptide exit tunnel on the outside of the ribosome. Forms the main docking site for trigger factor binding to the ribosome. This chain is Large ribosomal subunit protein uL23, found in Pseudothermotoga lettingae (strain ATCC BAA-301 / DSM 14385 / NBRC 107922 / TMO) (Thermotoga lettingae).